The chain runs to 332 residues: 5-formaminoimidazole-4-carboxamide-1-(beta)-D-ribofuranosyl 5'-monophosphate synthetase (332 aa).

2 residues coordinate 5-amino-1-(5-phospho-beta-D-ribosyl)imidazole-4-carboxamide: H9 and S72. Residues R93 to Q323 enclose the ATP-grasp domain. Residues P123–Y183 and E205 each bind ATP. Residue N229 participates in 5-amino-1-(5-phospho-beta-D-ribosyl)imidazole-4-carboxamide binding. Mg(2+)-binding residues include E268 and E281.

Belongs to the phosphohexose mutase family. Mg(2+) serves as cofactor. Mn(2+) is required as a cofactor.

It catalyses the reaction 5-amino-1-(5-phospho-beta-D-ribosyl)imidazole-4-carboxamide + formate + ATP = 5-formamido-1-(5-phospho-D-ribosyl)imidazole-4-carboxamide + ADP + phosphate. It participates in purine metabolism; IMP biosynthesis via de novo pathway; 5-formamido-1-(5-phospho-D-ribosyl)imidazole-4-carboxamide from 5-amino-1-(5-phospho-D-ribosyl)imidazole-4-carboxamide (formate route): step 1/1. Its function is as follows. Catalyzes the ATP- and formate-dependent formylation of 5-aminoimidazole-4-carboxamide-1-beta-d-ribofuranosyl 5'-monophosphate (AICAR) to 5-formaminoimidazole-4-carboxamide-1-beta-d-ribofuranosyl 5'-monophosphate (FAICAR) in the absence of folates. The protein is 5-formaminoimidazole-4-carboxamide-1-(beta)-D-ribofuranosyl 5'-monophosphate synthetase of Metallosphaera sedula (strain ATCC 51363 / DSM 5348 / JCM 9185 / NBRC 15509 / TH2).